Here is a 559-residue protein sequence, read N- to C-terminus: Dihydroxy-acid dehydratase (559 aa).

C56 contacts [2Fe-2S] cluster. Residue D88 participates in Mg(2+) binding. C129 is a [2Fe-2S] cluster binding site. Residues D130 and K131 each contribute to the Mg(2+) site. N6-carboxylysine is present on K131. A [2Fe-2S] cluster-binding site is contributed by C198. Residue E449 participates in Mg(2+) binding. S475 acts as the Proton acceptor in catalysis.

It belongs to the IlvD/Edd family. In terms of assembly, homodimer. It depends on [2Fe-2S] cluster as a cofactor. Mg(2+) is required as a cofactor.

It carries out the reaction (2R)-2,3-dihydroxy-3-methylbutanoate = 3-methyl-2-oxobutanoate + H2O. It catalyses the reaction (2R,3R)-2,3-dihydroxy-3-methylpentanoate = (S)-3-methyl-2-oxopentanoate + H2O. Its pathway is amino-acid biosynthesis; L-isoleucine biosynthesis; L-isoleucine from 2-oxobutanoate: step 3/4. It participates in amino-acid biosynthesis; L-valine biosynthesis; L-valine from pyruvate: step 3/4. Functionally, functions in the biosynthesis of branched-chain amino acids. Catalyzes the dehydration of (2R,3R)-2,3-dihydroxy-3-methylpentanoate (2,3-dihydroxy-3-methylvalerate) into 2-oxo-3-methylpentanoate (2-oxo-3-methylvalerate) and of (2R)-2,3-dihydroxy-3-methylbutanoate (2,3-dihydroxyisovalerate) into 2-oxo-3-methylbutanoate (2-oxoisovalerate), the penultimate precursor to L-isoleucine and L-valine, respectively. The protein is Dihydroxy-acid dehydratase of Ruthia magnifica subsp. Calyptogena magnifica.